We begin with the raw amino-acid sequence, 278 residues long: uncharacterized protein (278 aa).

NAD(+)-binding positions include His-112 to Ile-113, Val-191 to Arg-193, and Asp-217. Arg-193 is an active-site residue. Residue Glu-222 is part of the active site. The active-site Proton donor is His-241. Residue His-241–Gly-244 participates in NAD(+) binding.

It belongs to the D-isomer specific 2-hydroxyacid dehydrogenase family.

This is an uncharacterized protein from Streptomyces coelicolor.